Consider the following 350-residue polypeptide: Nicotinate-nucleotide--dimethylbenzimidazole phosphoribosyltransferase (350 aa).

Glu-317 serves as the catalytic Proton acceptor.

The protein belongs to the CobT family.

The catalysed reaction is 5,6-dimethylbenzimidazole + nicotinate beta-D-ribonucleotide = alpha-ribazole 5'-phosphate + nicotinate + H(+). It participates in nucleoside biosynthesis; alpha-ribazole biosynthesis; alpha-ribazole from 5,6-dimethylbenzimidazole: step 1/2. Catalyzes the synthesis of alpha-ribazole-5'-phosphate from nicotinate mononucleotide (NAMN) and 5,6-dimethylbenzimidazole (DMB). The sequence is that of Nicotinate-nucleotide--dimethylbenzimidazole phosphoribosyltransferase from Shewanella putrefaciens (strain CN-32 / ATCC BAA-453).